A 534-amino-acid chain; its full sequence is Glucans biosynthesis protein D (534 aa).

The segment at residues Met1 to Ala30 is a signal peptide (tat-type signal).

Belongs to the OpgD/OpgG family. Predicted to be exported by the Tat system. The position of the signal peptide cleavage has not been experimentally proven.

The protein localises to the periplasm. The protein operates within glycan metabolism; osmoregulated periplasmic glucan (OPG) biosynthesis. Probably involved in the control of the structural glucose backbone of osmoregulated periplasmic glucans (OPGs). This Xanthomonas oryzae pv. oryzae (strain PXO99A) protein is Glucans biosynthesis protein D.